A 563-amino-acid chain; its full sequence is (-)-germacrene D synthase (563 aa).

The stretch at 44 to 71 (TEITAAEKEELEKQKEKVKNLLDQTPND) forms a coiled coil. The Mn(2+) site is built by Asp-314 and Asp-318. The short motif at 314–318 (DDIYD) is the DDXXD motif element. 2 homodimerization regions span residues 320–326 (YGSLDEL) and 392–429 (EAEW…VGME). Mn(2+) contacts are provided by Asp-459 and Glu-467.

This sequence belongs to the terpene synthase family. Homodimer. Mn(2+) is required as a cofactor. Requires Mg(2+) as cofactor. In terms of tissue distribution, expressed in peltate glandular trichomes. Present at low levels in flowers, leaves and stems.

It carries out the reaction (2E,6E)-farnesyl diphosphate = (-)-germacrene D + diphosphate. It participates in secondary metabolite biosynthesis; terpenoid biosynthesis. Its function is as follows. Involved in the biosynthesis of phenolic sesquiterpenes natural products. Sesquiterpene synthase that catalyzes mainly the formation of (-)-germacrene D and minor amounts of other sesquiterpenes (e.g. bicyclo-germacrene) from farnesyl diphosphate (FPP). Also triggers moderate amounts formation of myrcene, limonene, terpinolene and linalool in the presence of geranyl diphosphate (GPP). This Origanum vulgare (Wild marjoram) protein is (-)-germacrene D synthase.